The following is a 185-amino-acid chain: Elongation factor P (185 aa).

It belongs to the elongation factor P family.

Its subcellular location is the cytoplasm. Its pathway is protein biosynthesis; polypeptide chain elongation. Functionally, involved in peptide bond synthesis. Stimulates efficient translation and peptide-bond synthesis on native or reconstituted 70S ribosomes in vitro. Probably functions indirectly by altering the affinity of the ribosome for aminoacyl-tRNA, thus increasing their reactivity as acceptors for peptidyl transferase. The polypeptide is Elongation factor P (Burkholderia vietnamiensis (strain G4 / LMG 22486) (Burkholderia cepacia (strain R1808))).